Consider the following 340-residue polypeptide: Uroporphyrinogen decarboxylase (340 aa).

Substrate is bound by residues 23–27 (RQAGR), D72, Y147, T202, and H316.

The protein belongs to the uroporphyrinogen decarboxylase family. Homodimer.

It is found in the cytoplasm. The enzyme catalyses uroporphyrinogen III + 4 H(+) = coproporphyrinogen III + 4 CO2. It functions in the pathway porphyrin-containing compound metabolism; protoporphyrin-IX biosynthesis; coproporphyrinogen-III from 5-aminolevulinate: step 4/4. Its function is as follows. Catalyzes the decarboxylation of four acetate groups of uroporphyrinogen-III to yield coproporphyrinogen-III. This chain is Uroporphyrinogen decarboxylase, found in Trichlorobacter lovleyi (strain ATCC BAA-1151 / DSM 17278 / SZ) (Geobacter lovleyi).